The sequence spans 268 residues: Protein CDV3 homolog (268 aa).

Residues Lys-40–Glu-50 show a composition bias toward basic and acidic residues. Disordered regions lie at residues Lys-40–Gly-145 and Gln-184–Ser-268. The segment covering Ala-51–Glu-61 has biased composition (low complexity). Positions Val-76 to Glu-85 are enriched in acidic residues. The segment covering Gln-98–Ser-107 has biased composition (polar residues). The segment covering Asn-123–Asn-132 has biased composition (acidic residues). The segment covering Arg-221–His-239 has biased composition (basic and acidic residues).

This sequence belongs to the CDV3 family.

This is Protein CDV3 homolog from Drosophila yakuba (Fruit fly).